The sequence spans 325 residues: Hydroxymethylglutaryl-CoA lyase, mitochondrial (325 aa).

The N-terminal 27 residues, 1 to 27 (MAAMRKAVPRRLVGLASLRAVSTSSMG), are a transit peptide targeting the mitochondrion. Positions 33 to 300 (VKIVEVGPRD…HTGVNLQKLL (268 aa)) constitute a Pyruvate carboxyltransferase domain. Arginine 41 is a binding site for substrate. Aspartate 42 provides a ligand contact to a divalent metal cation. Lysine 48 is subject to N6-acetyllysine; alternate. N6-succinyllysine; alternate is present on lysine 48. At lysine 111 the chain carries N6-acetyllysine. N6-acetyllysine; alternate occurs at positions 137 and 179. An N6-succinyllysine; alternate mark is found at lysine 137 and lysine 179. Histidine 233 and histidine 235 together coordinate a divalent metal cation. Cysteine 266 is a catalytic residue. Asparagine 275 provides a ligand contact to a divalent metal cation. The short motif at 323–325 (CKL) is the Microbody targeting signal element. The residue at position 324 (lysine 324) is an N6-acetyllysine.

Belongs to the HMG-CoA lyase family. Homodimer; disulfide-linked. Can also form homotetramers.

The protein resides in the mitochondrion matrix. Its subcellular location is the peroxisome. It carries out the reaction (3S)-3-hydroxy-3-methylglutaryl-CoA = acetoacetate + acetyl-CoA. Its pathway is metabolic intermediate metabolism; (S)-3-hydroxy-3-methylglutaryl-CoA degradation; acetoacetate from (S)-3-hydroxy-3-methylglutaryl-CoA: step 1/1. In terms of biological role, mitochondrial 3-hydroxy-3-methylglutaryl-CoA lyase that catalyzes a cation-dependent cleavage of (S)-3-hydroxy-3-methylglutaryl-CoA into acetyl-CoA and acetoacetate, a key step in ketogenesis. Terminal step in leucine catabolism. Ketone bodies (beta-hydroxybutyrate, acetoacetate and acetone) are essential as an alternative source of energy to glucose, as lipid precursors and as regulators of metabolism. The chain is Hydroxymethylglutaryl-CoA lyase, mitochondrial (HMGCL) from Pongo abelii (Sumatran orangutan).